A 230-amino-acid polypeptide reads, in one-letter code: 2-C-methyl-D-erythritol 4-phosphate cytidylyltransferase (230 aa).

It belongs to the IspD/TarI cytidylyltransferase family. IspD subfamily.

The enzyme catalyses 2-C-methyl-D-erythritol 4-phosphate + CTP + H(+) = 4-CDP-2-C-methyl-D-erythritol + diphosphate. The protein operates within isoprenoid biosynthesis; isopentenyl diphosphate biosynthesis via DXP pathway; isopentenyl diphosphate from 1-deoxy-D-xylulose 5-phosphate: step 2/6. Catalyzes the formation of 4-diphosphocytidyl-2-C-methyl-D-erythritol from CTP and 2-C-methyl-D-erythritol 4-phosphate (MEP). The chain is 2-C-methyl-D-erythritol 4-phosphate cytidylyltransferase from Nocardia farcinica (strain IFM 10152).